Consider the following 401-residue polypeptide: Large ribosomal subunit protein uL4B (401 aa).

Residues 351-373 show a composition bias toward basic and acidic residues; the sequence is IKAKEKKPDDGKPKAKKPLDAKT. The tract at residues 351–401 is disordered; the sequence is IKAKEKKPDDGKPKAKKPLDAKTKMIKLAKAKKRQARAEAKTAEAKTAESK. Basic residues predominate over residues 374-385; it reads KMIKLAKAKKRQ. Basic and acidic residues predominate over residues 386 to 401; the sequence is ARAEAKTAEAKTAESK.

The protein belongs to the universal ribosomal protein uL4 family. Component of the large ribosomal subunit.

It localises to the cytoplasm. Component of the large ribosomal subunit. The ribosome is a large ribonucleoprotein complex responsible for the synthesis of proteins in the cell. The polypeptide is Large ribosomal subunit protein uL4B (rpl4-b) (Xenopus laevis (African clawed frog)).